The primary structure comprises 142 residues: Prefoldin subunit alpha (142 aa).

This sequence belongs to the prefoldin subunit alpha family. As to quaternary structure, heterohexamer of two alpha and four beta subunits.

It localises to the cytoplasm. Functionally, molecular chaperone capable of stabilizing a range of proteins. Seems to fulfill an ATP-independent, HSP70-like function in archaeal de novo protein folding. The protein is Prefoldin subunit alpha of Methanosarcina acetivorans (strain ATCC 35395 / DSM 2834 / JCM 12185 / C2A).